The sequence spans 288 residues: Rhox homeobox family member 2B (288 aa).

The disordered stretch occupies residues 16 to 136 (SPAVDDEKEL…GLEPGNAQQP (121 aa)). Residues 39-48 (VKEEEEDAQP) are compositionally biased toward acidic residues. Positions 68–80 (GEEKDGGGEEKDG) are enriched in basic and acidic residues. Residues 134 to 193 (QQPNVHAFTPLQLQELECIFQREQFPSEFLRRRLARSMNVTELAVQIWFENRRAKWRRHQ) constitute a DNA-binding region (homeobox). A Nuclear localization signal motif is present at residues 186–195 (RAKWRRHQRA).

This sequence belongs to the paired-like homeobox family. PEPP subfamily. Expressed in testis, mainly expressed in germ cells, but also detected in somatic cells such as Sertoli cells, Leydig cells and peritubular cells.

It localises to the nucleus. Functionally, transcription factor maybe involved in reproductive processes. Modulates expression of target genes encoding proteins involved in processes relevant to spermatogenesis. The protein is Rhox homeobox family member 2B of Homo sapiens (Human).